Consider the following 111-residue polypeptide: Flagellar hook-basal body complex protein FliE (111 aa).

The protein belongs to the FliE family.

It localises to the bacterial flagellum basal body. This is Flagellar hook-basal body complex protein FliE from Clostridium acetobutylicum (strain ATCC 824 / DSM 792 / JCM 1419 / IAM 19013 / LMG 5710 / NBRC 13948 / NRRL B-527 / VKM B-1787 / 2291 / W).